Here is a 178-residue protein sequence, read N- to C-terminus: Large ribosomal subunit protein bL19 (178 aa).

This sequence belongs to the bacterial ribosomal protein bL19 family.

In terms of biological role, this protein is located at the 30S-50S ribosomal subunit interface and may play a role in the structure and function of the aminoacyl-tRNA binding site. The protein is Large ribosomal subunit protein bL19 of Rhizobium etli (strain ATCC 51251 / DSM 11541 / JCM 21823 / NBRC 15573 / CFN 42).